A 357-amino-acid polypeptide reads, in one-letter code: Peptide chain release factor 1 (357 aa).

N5-methylglutamine is present on Gln-234.

The protein belongs to the prokaryotic/mitochondrial release factor family. Methylated by PrmC. Methylation increases the termination efficiency of RF1.

The protein resides in the cytoplasm. Functionally, peptide chain release factor 1 directs the termination of translation in response to the peptide chain termination codons UAG and UAA. This is Peptide chain release factor 1 from Nocardioides sp. (strain ATCC BAA-499 / JS614).